Reading from the N-terminus, the 664-residue chain is Macoilin (664 aa).

The next 4 membrane-spanning stretches (helical) occupy residues 28 to 48 (TFLY…DFVL), 75 to 95 (AFSV…LLFI), 120 to 140 (VCLP…AIRF), and 154 to 174 (FAAH…KSYV). Basic and acidic residues predominate over residues 253 to 265 (REKGKEKDKDAKK). The segment at 253-274 (REKGKEKDKDAKKHNLGINNNN) is disordered. A Phosphoserine modification is found at Ser-305. The span at 320-348 (KNYKNASGVVNSSPRSHSATNGSIPSSSS) shows a compositional bias: polar residues. The interval 320–367 (KNYKNASGVVNSSPRSHSATNGSIPSSSSKNEKKQKCTSKSPSAHKDL) is disordered. Residue Asn-324 is glycosylated (N-linked (GlcNAc...) asparagine). Ser-332 bears the Phosphoserine mark. 2 N-linked (GlcNAc...) asparagine glycosylation sites follow: Asn-340 and Asn-452. A phosphoserine mark is found at Ser-631 and Ser-634. The tract at residues 631–664 (SPLSPVSPHYSSKFVETSPSGLDPNASVYQPLKK) is disordered. Asn-655 is a glycosylation site (N-linked (GlcNAc...) asparagine).

Belongs to the macoilin family.

The protein localises to the rough endoplasmic reticulum membrane. It is found in the nucleus membrane. Functionally, plays a role in the regulation of neuronal activity. The chain is Macoilin (MACO1) from Bos taurus (Bovine).